Consider the following 524-residue polypeptide: uncharacterized protein (524 aa).

Residues 1–21 (MLLRSVWYKLGSLLIILPLTG) form the signal peptide. Cys-22 carries N-palmitoyl cysteine lipidation. The S-diacylglycerol cysteine moiety is linked to residue Cys-22.

This sequence belongs to the MG067/MG068/MG395 family.

The protein localises to the cell membrane. This is an uncharacterized protein from Mycoplasma pneumoniae (strain ATCC 29342 / M129 / Subtype 1) (Mycoplasmoides pneumoniae).